The chain runs to 338 residues: Glycerol-3-phosphate dehydrogenase [NAD(P)+] (338 aa).

3 residues coordinate NADPH: S13, W14, and K108. Sn-glycerol 3-phosphate is bound by residues K108, G139, and S141. Residue A143 participates in NADPH binding. Sn-glycerol 3-phosphate-binding residues include K194, D247, S257, R258, and N259. K194 acts as the Proton acceptor in catalysis. R258 is a binding site for NADPH. V282 and E284 together coordinate NADPH.

The protein belongs to the NAD-dependent glycerol-3-phosphate dehydrogenase family.

The protein resides in the cytoplasm. It carries out the reaction sn-glycerol 3-phosphate + NAD(+) = dihydroxyacetone phosphate + NADH + H(+). The catalysed reaction is sn-glycerol 3-phosphate + NADP(+) = dihydroxyacetone phosphate + NADPH + H(+). The protein operates within membrane lipid metabolism; glycerophospholipid metabolism. Catalyzes the reduction of the glycolytic intermediate dihydroxyacetone phosphate (DHAP) to sn-glycerol 3-phosphate (G3P), the key precursor for phospholipid synthesis. This Streptococcus pneumoniae (strain Hungary19A-6) protein is Glycerol-3-phosphate dehydrogenase [NAD(P)+].